A 281-amino-acid polypeptide reads, in one-letter code: Ribosomal RNA small subunit methyltransferase I (281 aa).

Belongs to the methyltransferase superfamily. RsmI family.

It localises to the cytoplasm. It carries out the reaction cytidine(1402) in 16S rRNA + S-adenosyl-L-methionine = 2'-O-methylcytidine(1402) in 16S rRNA + S-adenosyl-L-homocysteine + H(+). Functionally, catalyzes the 2'-O-methylation of the ribose of cytidine 1402 (C1402) in 16S rRNA. The chain is Ribosomal RNA small subunit methyltransferase I from Erythrobacter litoralis (strain HTCC2594).